The primary structure comprises 156 residues: Low-salt glycan biosynthesis protein Agl8 (156 aa).

Substrate-binding positions include 14–15 (RI) and R47. Residues 25–156 (ANVPLVSVDL…YVERYLDALD (132 aa)) enclose the Nudix hydrolase domain. Mg(2+) contacts are provided by G60, E80, and Q130. A Nudix box motif is present at residues 61–82 (GTVFKNETLTDALYRVADEELG).

The protein belongs to the Nudix hydrolase family. Mg(2+) is required as a cofactor.

The protein operates within protein modification; protein glycosylation. Its pathway is cell surface structure biogenesis; S-layer biogenesis. Nudix hydrolase involved in N-glycan biosynthetic pathway that takes place under low-salt conditions (1.75 M instead of 3.4 M). Participates in the formation of the tetrasaccharide present at 'Asn-532' of S-layer glycoprotein Csg, consisting of a sulfated hexose, 2 hexoses and rhamnose. Mediates attachment of sugar 3 in the tetrasaccharide. This Haloferax volcanii (strain ATCC 29605 / DSM 3757 / JCM 8879 / NBRC 14742 / NCIMB 2012 / VKM B-1768 / DS2) (Halobacterium volcanii) protein is Low-salt glycan biosynthesis protein Agl8 (agl8).